A 377-amino-acid polypeptide reads, in one-letter code: Opsin-5 (377 aa).

Residues 1–33 (MALNHTALPQDERLPHYLRDEDPFASKLSWEAD) are Extracellular-facing. Residue Asn-4 is glycosylated (N-linked (GlcNAc...) asparagine). The chain crosses the membrane as a helical span at residues 34–54 (LVAGFYLTIIGILSTFGNGYV). Topologically, residues 55-74 (LYMSSRRKKKLRPAEIMTIN) are cytoplasmic. A helical transmembrane segment spans residues 75 to 95 (LAVCDLGISVVGKPFTIISCF). Topologically, residues 96 to 108 (CHRWVFGWFGCRW) are extracellular. An intrachain disulfide couples Cys-106 to Cys-183. The helical transmembrane segment at 109–129 (YGWAGFFFGCGSLITMTAVSL) threads the bilayer. At 130-150 (DRYLKICYLSYGVWLKRKHAY) the chain is on the cytoplasmic side. The chain crosses the membrane as a helical span at residues 151–171 (ICLAVIWAYASFWTTMPLVGL). Over 172–197 (GDYAPEPFGTSCTLDWWLAQASGGGQ) the chain is Extracellular. Residues 198 to 218 (VFILSILFFCLLLPTAVIVFS) form a helical membrane-spanning segment. At 219–252 (YAKIIAKVKSSSKEVAHFDSRIHSSHVLEVKLTK) the chain is on the cytoplasmic side. A helical transmembrane segment spans residues 253–273 (VAMLICAGFLIAWIPYAVVSV). The Extracellular portion of the chain corresponds to 274 to 288 (WSAFGRPDSIPIQLS). The chain crosses the membrane as a helical span at residues 289 to 309 (VVPTLLAKSAAMYNPIIYQVI). Lys-296 is subject to N6-(retinylidene)lysine. Topologically, residues 310 to 377 (DYRFACCQAG…HSNDGDCGKK (68 aa)) are cytoplasmic. 2 S-palmitoyl cysteine lipidation sites follow: Cys-315 and Cys-316. The tract at residues 357–377 (FTSAHVMDGESHSNDGDCGKK) is disordered. A compositionally biased stretch (basic and acidic residues) spans 363-377 (MDGESHSNDGDCGKK).

It belongs to the G-protein coupled receptor 1 family. Opsin subfamily. Post-translationally, it is uncertain whether Cys-315 or Cys-316 is palmitoylated. Expressed in the brain (at protein level). Weakly expressed in the skin and liver (at protein level). Abundantly expressed in striated muscle cells. Expressed in Math7/Atok7-dependent retinal ganglion cells in the ganglion cell layer (at protein level). Additionally expressed in horizontal and amacrine cells in the inner nuclear layer of the retina (at protein level). Expressed around the base of hair follicles and in epidermal and sebaceous gland cells of the outer ear (at protein level). Abundantly expressed in vibrissae hair follicles and weakly expressed in the vibrissae skin pad, dorsal back skin, and tail.

The protein resides in the cell membrane. Functionally, G-protein coupled receptor which selectively activates G(i) type G proteins via ultraviolet A (UVA) light-mediated activation in the retina. Preferentially binds the chromophore 11-cis retinal and is a bistable protein that displays emission peaks at 380 nm (UVA light) and 470 nm (blue light). Required for the light-response in the inner plexiform layer, and contributes to the regulation of the light-response in the nerve fiber layer, via phosphorylated DAT/SLC6A3 dopamine uptake. Involved in local corneal and retinal circadian rhythm photoentrainment via modulation of the UVA light-induced phase-shift of the retina clock. Acts as a circadian photoreceptor in the outer ear and vibrissal pads, via modulation of circadian clock-gene expression in response to violet light during the light-to-dark transition phase and night phase of the circadian cycle. Required in the retina to negatively regulate hyaloid vessel regression during postnatal development via light-dependent OPN5-SLC32A1-DRD2-VEGFR2 signaling. Involved in the light-dependent regulation of retina and vitreous compartment dopamine levels. This Mus musculus (Mouse) protein is Opsin-5 (Opn5).